A 384-amino-acid polypeptide reads, in one-letter code: Probable UDP-galactopyranose mutase (384 aa).

A signal peptide spans Met1 to Ala19. FAD-binding positions include Ser14, Asp33 to Arg34, Asn41, and His60 to Ile61. UDP-alpha-D-galactose is bound by residues Asn84, Phe151, Thr156, Trp160, and Tyr185. An FAD-binding site is contributed by Phe219. Asn270, Arg280, and Tyr314 together coordinate UDP-alpha-D-galactose. Residue Arg343 coordinates FAD. Tyr349 is a binding site for UDP-alpha-D-galactose. Position 350–355 (Leu350–Thr355) interacts with FAD.

It belongs to the UDP-galactopyranose/dTDP-fucopyranose mutase family. Homodimer. The cofactor is FAD.

The catalysed reaction is UDP-alpha-D-galactose = UDP-alpha-D-galactofuranose. The protein operates within bacterial outer membrane biogenesis; LPS O-antigen biosynthesis. Catalyzes the interconversion through a 2-keto intermediate of uridine diphosphogalactopyranose (UDP-GalP) into uridine diphosphogalactofuranose (UDP-GalF). This is Probable UDP-galactopyranose mutase (rfbD) from Klebsiella pneumoniae.